The sequence spans 1070 residues: DNA-directed RNA polymerase subunit beta (1070 aa).

It belongs to the RNA polymerase beta chain family. In terms of assembly, in plastids the minimal PEP RNA polymerase catalytic core is composed of four subunits: alpha, beta, beta', and beta''. When a (nuclear-encoded) sigma factor is associated with the core the holoenzyme is formed, which can initiate transcription.

It is found in the plastid. Its subcellular location is the chloroplast. It carries out the reaction RNA(n) + a ribonucleoside 5'-triphosphate = RNA(n+1) + diphosphate. Functionally, DNA-dependent RNA polymerase catalyzes the transcription of DNA into RNA using the four ribonucleoside triphosphates as substrates. The sequence is that of DNA-directed RNA polymerase subunit beta from Solanum bulbocastanum (Wild potato).